The following is a 156-amino-acid chain: MSSNKINKKSIARIAAVQAIYQNILQNNDDMDDIMQNVLSFYQNNNSITDLPENLKISLSISHFKMLVKLVFENIHKLDEIIDNHLTNDKDPAHMPILLRALLRVSICELLFCPTTPAKVVINEYTDIANDMLNEHEIGFVNSVLDKIAKEHTRLI.

It belongs to the NusB family.

Involved in transcription antitermination. Required for transcription of ribosomal RNA (rRNA) genes. Binds specifically to the boxA antiterminator sequence of the ribosomal RNA (rrn) operons. The sequence is that of Transcription antitermination protein NusB from Rickettsia rickettsii (strain Iowa).